The sequence spans 88 residues: MNLACVLIVAVLFLTASQLATAASYARDKQEYPAVRSSDEMQDSEDLTLTKECTDDSQFCDPNDHDCCSGECIDEGGRGVCAIVPEHV.

The signal sequence occupies residues 1–22 (MNLACVLIVAVLFLTASQLATA). Residues 23–52 (ASYARDKQEYPAVRSSDEMQDSEDLTLTKE) constitute a propeptide that is removed on maturation. 3 disulfides stabilise this stretch: cysteine 53/cysteine 68, cysteine 60/cysteine 72, and cysteine 67/cysteine 81.

In terms of tissue distribution, expressed by the venom duct.

The protein localises to the secreted. In terms of biological role, may act as a neurotoxin, but produces no obvious effect on ionic currents when tested on the mouse dorsal rooted ganglia (DRG). The protein is Conotoxin VxVIB of Conus vexillum (Flag cone).